A 109-amino-acid chain; its full sequence is MLPMNPKQMKKMMKQMGIEMEELDAEEVIIRTSDEELIFRNPNVSKISARGVETFQIVGEYEVVKRPPKISEDDIKLIMEQANVDEETARRALEEAGGDLAEALMKLQE.

The NAC-A/B domain occupies 3-70 (PMNPKQMKKM…YEVVKRPPKI (68 aa)).

It belongs to the NAC-alpha family. Homodimer. Interacts with the ribosome. Binds ribosomal RNA.

Its function is as follows. Contacts the emerging nascent chain on the ribosome. The chain is Nascent polypeptide-associated complex protein from Archaeoglobus fulgidus (strain ATCC 49558 / DSM 4304 / JCM 9628 / NBRC 100126 / VC-16).